The following is a 421-amino-acid chain: Ribulose bisphosphate carboxylase large chain (421 aa).

The substrate site is built by Asn68 and Thr118. Lys120 serves as the catalytic Proton acceptor. Lys122 contributes to the substrate binding site. Mg(2+) is bound by residues Lys146, Asp148, and Glu149. The residue at position 146 (Lys146) is an N6-carboxylysine. His239 serves as the catalytic Proton acceptor. Substrate-binding residues include Arg240, His272, and Ser324.

The protein belongs to the RuBisCO large chain family. Type I subfamily. Heterohexadecamer of 8 large chains and 8 small chains; disulfide-linked. The disulfide link is formed within the large subunit homodimers. Requires Mg(2+) as cofactor. In terms of processing, the disulfide bond which can form in the large chain dimeric partners within the hexadecamer appears to be associated with oxidative stress and protein turnover.

Its subcellular location is the plastid. The protein localises to the chloroplast. It catalyses the reaction 2 (2R)-3-phosphoglycerate + 2 H(+) = D-ribulose 1,5-bisphosphate + CO2 + H2O. The catalysed reaction is D-ribulose 1,5-bisphosphate + O2 = 2-phosphoglycolate + (2R)-3-phosphoglycerate + 2 H(+). Functionally, ruBisCO catalyzes two reactions: the carboxylation of D-ribulose 1,5-bisphosphate, the primary event in carbon dioxide fixation, as well as the oxidative fragmentation of the pentose substrate in the photorespiration process. Both reactions occur simultaneously and in competition at the same active site. The protein is Ribulose bisphosphate carboxylase large chain (rbcL) of Aegilops crassa (Persian goatgrass).